A 674-amino-acid chain; its full sequence is DNA mismatch repair protein MutL (674 aa).

The protein belongs to the DNA mismatch repair MutL/HexB family.

Its function is as follows. This protein is involved in the repair of mismatches in DNA. It is required for dam-dependent methyl-directed DNA mismatch repair. May act as a 'molecular matchmaker', a protein that promotes the formation of a stable complex between two or more DNA-binding proteins in an ATP-dependent manner without itself being part of a final effector complex. The polypeptide is DNA mismatch repair protein MutL (Clostridium perfringens (strain 13 / Type A)).